The chain runs to 509 residues: Scavenger receptor class B member 1 (509 aa).

At 1–11 (MGNLSRARRVT) the chain is on the cytoplasmic side. Residues 12–32 (AALGFIGLLFAVLGIIMIVMV) form a helical membrane-spanning segment. Over 33–440 (PSIIKQQVLK…YIQLVLMPKV (408 aa)) the chain is Extracellular. Residues Asn-102, Asn-108, Asn-173, Asn-212, Asn-227, Asn-255, Asn-310, Asn-330, and Asn-383 are each glycosylated (N-linked (GlcNAc...) asparagine). Cys-251 and Cys-384 are joined by a disulfide. A helical transmembrane segment spans residues 441-461 (LHYAQYVLLALGCVLLLIPII). Residues 462-509 (YQIRSQEKCYLFWISFKKGSKDKEAVQAYSEFLMTSAPKGTVLQEARL) are Cytoplasmic-facing.

Belongs to the CD36 family. In terms of processing, N-glycosylated. The six cysteines of the extracellular domain are all involved in intramolecular disulfide bonds.

The protein resides in the cell membrane. It is found in the membrane. It localises to the caveola. Its function is as follows. Receptor for different ligands such as phospholipids, cholesterol ester, lipoproteins, phosphatidylserine and apoptotic cells. Receptor for HDL, mediating selective uptake of cholesteryl ether and HDL-dependent cholesterol efflux. Also facilitates the flux of free and esterified cholesterol between the cell surface and apoB-containing lipoproteins and modified lipoproteins, although less efficiently than HDL. May be involved in the phagocytosis of apoptotic cells, via its phosphatidylserine binding activity. This chain is Scavenger receptor class B member 1 (SCARB1), found in Bos taurus (Bovine).